A 557-amino-acid chain; its full sequence is DNA mismatch repair protein MutL (557 aa).

Belongs to the DNA mismatch repair MutL/HexB family.

Its function is as follows. This protein is involved in the repair of mismatches in DNA. It is required for dam-dependent methyl-directed DNA mismatch repair. May act as a 'molecular matchmaker', a protein that promotes the formation of a stable complex between two or more DNA-binding proteins in an ATP-dependent manner without itself being part of a final effector complex. This is DNA mismatch repair protein MutL from Methanothrix thermoacetophila (strain DSM 6194 / JCM 14653 / NBRC 101360 / PT) (Methanosaeta thermophila).